A 137-amino-acid polypeptide reads, in one-letter code: Large-conductance mechanosensitive channel (137 aa).

Helical transmembrane passes span 9–29 (AFAV…GAAF), 32–52 (IVSS…IGGV), 54–74 (FGDL…VVLA), and 79–99 (IQSI…VKVI).

The protein belongs to the MscL family. As to quaternary structure, homopentamer.

It is found in the cell inner membrane. Its function is as follows. Channel that opens in response to stretch forces in the membrane lipid bilayer. May participate in the regulation of osmotic pressure changes within the cell. This chain is Large-conductance mechanosensitive channel, found in Pseudomonas fluorescens (strain ATCC BAA-477 / NRRL B-23932 / Pf-5).